The sequence spans 621 residues: MBT domain-containing protein 1 (621 aa).

Residues 1 to 21 (MEKTKDPADRSSRSERKRRDS) are compositionally biased toward basic and acidic residues. The interval 1-55 (MEKTKDPADRSSRSERKRRDSFGMFDGYDSCSEDTSSSSSSDESEEEVAPLPSSL) is disordered. The segment covering 29-41 (DSCSEDTSSSSSS) has biased composition (low complexity). The FCS-type zinc finger occupies 68–103 (PDGKSGMATCEMCGMVGVRDAFYSKTKRFCSVSCSR). Zn(2+) contacts are provided by Cys77, Cys80, Cys97, and Cys101. MBT repeat units lie at residues 164 to 268 (FSWG…LVPP), 276 to 373 (TNWK…IGHR), 374 to 479 (FKRT…LTPP), and 487 to 583 (FKWF…LQPP). A disordered region spans residues 581–621 (QPPAPQSNKDGQSNVSKQKKKSKSQPYKGHKKNFRKPGNRP). Residues 597 to 621 (KQKKKSKSQPYKGHKKNFRKPGNRP) show a composition bias toward basic residues.

As to quaternary structure, monomer. Component of the NuA4 histone acetyltransferase complex.

It is found in the nucleus. The protein localises to the chromosome. Chromatin reader component of the NuA4 histone acetyltransferase complex, a multiprotein complex involved in transcriptional activation of select genes principally by acetylation of nucleosomal histones H4 and H2A. The NuA4 complex plays a direct role in repair of DNA double-strand breaks (DSBs) by promoting homologous recombination (HR). MBTD1 specifically recognizes and binds monomethylated and dimethylated 'Lys-20' on histone H4 (H4K20me1 and H4K20me2, respectively). In the NuA4 complex, MBTD1 promotes recruitment of the complex to H4K20me marks by competing with TP53BP1 for binding to H4K20me. Following recruitment to H4K20me at DNA breaks, the NuA4 complex catalyzes acetylation of 'Lys-15' on histone H2A (H2AK15), blocking the ubiquitination mark required for TP53BP1 localization at DNA breaks, thereby promoting homologous recombination (HR). The protein is MBT domain-containing protein 1 of Xenopus laevis (African clawed frog).